The following is an 884-amino-acid chain: Protein translocase subunit SecA (884 aa).

Residues Gln-88, 106–110 (GEGKT), and Asp-509 each bind ATP. Residues 822–884 (EQKKLKMSGA…PKKGLFANND (63 aa)) form a disordered region. The span at 833–842 (KGGEDLEETK) shows a compositional bias: basic and acidic residues. Cys-858, Cys-860, Cys-869, and His-870 together coordinate Zn(2+).

Belongs to the SecA family. In terms of assembly, monomer and homodimer. Part of the essential Sec protein translocation apparatus which comprises SecA, SecYEG and auxiliary proteins SecDF-YajC and YidC. The cofactor is Zn(2+).

It is found in the cell inner membrane. Its subcellular location is the cytoplasm. It catalyses the reaction ATP + H2O + cellular proteinSide 1 = ADP + phosphate + cellular proteinSide 2.. Functionally, part of the Sec protein translocase complex. Interacts with the SecYEG preprotein conducting channel. Has a central role in coupling the hydrolysis of ATP to the transfer of proteins into and across the cell membrane, serving as an ATP-driven molecular motor driving the stepwise translocation of polypeptide chains across the membrane. In Campylobacter hominis (strain ATCC BAA-381 / DSM 21671 / CCUG 45161 / LMG 19568 / NCTC 13146 / CH001A), this protein is Protein translocase subunit SecA.